A 396-amino-acid chain; its full sequence is MSLYGMMRTGVSGMNAQANRLSTVADNIANASTVGYKRAETQFSSLVLPSTAGQYNSGSVLTDVRYGISDQGGIRSTSSTTDLAIDGNGYFVVQGPGGSTYLTRAGSFVPDKNGDLVNSAGYYLLGAGADEAAGGLTVAGLNIVNVNAAALPAEGSTAGDFTVNLPSTDQAPAAGGYNHKTSLISYNDKGEKITLDVYFTKTGADEWNVSVKNAADGVEIGTTVLNFDPTTGDLVSGGNVAVNLGAYGGQTLNLNLGGSTQRAGDYTISQAVINGQAPSSIKGVDVGNDGAVVAVYENGTQKVLYRIPLANVASPDRMTVVSGNIFLPSAESGDVRLGFPQGDGMGKIMSGTLEESNADIAQELTDMIEAQRSYTANSKVFQTGFELMDVLVNLKR.

The protein belongs to the flagella basal body rod proteins family.

It localises to the bacterial flagellum basal body. In terms of biological role, the flagellum is required to cause a persistent disease in a murine model of infection. The protein is Flagellar hook protein FlgE (flgE) of Brucella melitensis biotype 1 (strain ATCC 23456 / CCUG 17765 / NCTC 10094 / 16M).